Reading from the N-terminus, the 515-residue chain is mRNA export factor ICP27 homolog (515 aa).

Residues Cys230, His335, Cys337, and Cys342 each coordinate Zn(2+). A CHC2-type zinc finger spans residues 230 to 342; it reads CVFNDNGHGD…SNHKCDDVSC (113 aa). Residues 398 to 408 are compositionally biased toward polar residues; that stretch reads YSTNHDLPQTS. The tract at residues 398–422 is disordered; the sequence is YSTNHDLPQTSHRSHKNHGTPKVKS. Positions 409–422 are enriched in basic residues; that stretch reads HRSHKNHGTPKVKS.

It belongs to the HHV-1 ICP27 protein family.

It localises to the virion tegument. The protein localises to the virion. Its subcellular location is the host nucleus. It is found in the host cytoplasm. In terms of biological role, immediate early (EI) protein that plays many roles during productive infection including regulation of viral gene expression and nuclear export of intronless viral RNAs. This is mRNA export factor ICP27 homolog from Human herpesvirus 6A (strain Uganda-1102) (HHV-6 variant A).